The primary structure comprises 193 residues: MSISVMANSHLNQPYASASPTPQEKGRTCRYAGQAVRALPIRVITVGKKRSEGVRLLVDEYKIKLKPYCSFEDSLVRSNPRNAQDVRAQVEDEEVAMMKLIGSDDWVVVLDERGRDIDSEQMAELLGDAGNSGASRISFCIGGAYGHGTQVRKRANVTIRLSSMVLNHQIALVVLMEQLYRSWTILKGQNYHH.

Residues leucine 110, glycine 142, and 161–166 (LSSMVL) contribute to the S-adenosyl-L-methionine site.

It belongs to the RNA methyltransferase RlmH family.

This chain is Putative RNA methyltransferase At5g10620, found in Arabidopsis thaliana (Mouse-ear cress).